We begin with the raw amino-acid sequence, 29 residues long: Lambda-theraphotoxin-Ec2b (29 aa).

3 cysteine pairs are disulfide-bonded: Cys2–Cys16, Cys9–Cys21, and Cys15–Cys25.

Belongs to the neurotoxin 30 (phrixotoxin) family. Expressed by the venom gland.

The protein resides in the secreted. Its function is as follows. Insect-selective neurotoxin that potently blocks insect calcium-activated potassium (BKCa) channels (Slo-type) in cockroach dorsal unpaired median (DUM) neurons (IC(50)=25.3 nM). This occurs in the absence of any shifts in the voltage dependence of activation. May interact with the turret and/or loop region of the external entrance to the channel and does not project deeply into the pore of the channel. In vivo, does not show toxicity in mice after intracerebroventricular injection of up to 25 pmol/g (1.8 ug/20 g mouse). This Eucratoscelus constrictus (African red-rump baboon spider) protein is Lambda-theraphotoxin-Ec2b.